The chain runs to 267 residues: Membrane-spanning 4-domains subfamily A member 12 (267 aa).

Over 1–91 the chain is Cytoplasmic; the sequence is MMSSKPTSHA…MNFKEEAKAL (91 aa). Residues 92–112 form a helical membrane-spanning segment; sequence GVIQIMVGLMHIGFGIVLCLI. The Extracellular portion of the chain corresponds to 113–120; the sequence is SFSFREVL. The helical transmembrane segment at 121 to 141 threads the bilayer; that stretch reads GFASTAVIGGYPFWGGLSFII. Over 142-160 the chain is Cytoplasmic; it reads SGSLSVSASKELSRCLVKG. A helical membrane pass occupies residues 161–181; sequence SLGMNIVSSILAFIGVILLLV. The Extracellular segment spans residues 182–200; it reads DMCINGVAGQDYWAVLSGK. The chain crosses the membrane as a helical span at residues 201-221; sequence GISATLMIFSLLEFFVACATA. At 222 to 267 the chain is on the cytoplasmic side; the sequence is HFANQANTTTNMSVLVIPNMYESNPVTPASSSAPPRCNNYSANAPK. The segment at 248–267 is disordered; sequence TPASSSAPPRCNNYSANAPK.

It belongs to the MS4A family.

It localises to the membrane. Functionally, may be involved in signal transduction as a component of a multimeric receptor complex. This Homo sapiens (Human) protein is Membrane-spanning 4-domains subfamily A member 12 (MS4A12).